The following is a 395-amino-acid chain: DNA polymerase IV (395 aa).

One can recognise a UmuC domain in the interval 7–187 (FFHVDIDAFF…LPLKDVWGVG (181 aa)). Mg(2+) contacts are provided by D11 and D105. E106 is an active-site residue.

Belongs to the DNA polymerase type-Y family. As to quaternary structure, monomer. The cofactor is Mg(2+).

It is found in the cytoplasm. It catalyses the reaction DNA(n) + a 2'-deoxyribonucleoside 5'-triphosphate = DNA(n+1) + diphosphate. Poorly processive, error-prone DNA polymerase involved in untargeted mutagenesis. Copies undamaged DNA at stalled replication forks, which arise in vivo from mismatched or misaligned primer ends. These misaligned primers can be extended by PolIV. Exhibits no 3'-5' exonuclease (proofreading) activity. May be involved in translesional synthesis, in conjunction with the beta clamp from PolIII. This chain is DNA polymerase IV, found in Treponema denticola (strain ATCC 35405 / DSM 14222 / CIP 103919 / JCM 8153 / KCTC 15104).